Reading from the N-terminus, the 499-residue chain is Zinc finger protein PLAG1 (499 aa).

Residues 1 to 33 form a disordered region; that stretch reads MATVIPGDLSEVRDTQKAPSGKRKRGESKPRKN. The segment at 2–84 is interaction with KPNA2; that stretch reads ATVIPGDLSE…SKYKLQRHMA (83 aa). The Nuclear localization signal signature appears at 22 to 25; sequence KRKR. C2H2-type zinc fingers lie at residues 34-56, 62-86, 92-114, 121-143, 150-172, 185-207, and 213-236; these read FPCQLCDKAFNSVEKLKVHSFSH, YKCTHQDCTKAFVSKYKLQRHMATH, HKCNYCEKMFHRKDHLKNHLHTH, FKCEECGKSYNTKLGFKRHLALH, LTCKVCLQTFESTGVLLEHLKSH, HQCEHCERRFYTRKDVRRHMVVH, and FLCQYCAQRFGRKDHLTRHMKKSH. Residues 41–242 are decreased nuclear import with localization in the nucleus but also in the cytoplasm; the sequence is KAFNSVEKLK…KKSHNQELLK (202 aa). Residues 243–383 are repression domain; contains 3 sumoylation motifs and massively decrease transcription activity; sequence VKTEPVDFLD…SQASSSKLGL (141 aa). The tract at residues 243–499 is activates transcription; Inhibition of nuclear import due to lack of NLS and KPNA2 interaction; the sequence is VKTEPVDFLD…TLPRFHQAFQ (257 aa). Residues Lys-244 and Lys-263 each participate in a glycyl lysine isopeptide (Lys-Gly) (interchain with G-Cter in SUMO) cross-link. Residues 364 to 400 are disordered; that stretch reads QGGAPSSSQDSQASSSKLGLEPQSGSPDDGAGDLSLS. The span at 369 to 379 shows a compositional bias: low complexity; sequence SSSQDSQASSS. Residues 384 to 499 are massively activates transcription; it reads EPQSGSPDDG…TLPRFHQAFQ (116 aa).

It belongs to the krueppel C2H2-type zinc-finger protein family. As to quaternary structure, interacts with KPNA2, which escorts protein to the nucleus via interaction with nuclear localization signal. Interacts with E3 SUMO-protein ligase PIAS1, PIAS2 and PIAS4. In terms of processing, sumoylated with SUMO1; which inhibits transcriptional activity, but does not affect nuclear localization. Blockers of sumoylation pathway such as SENP3 and inactive UBE2I increases transcriptional capacity. Sumoylation is increased in the presence of PIAS1. Acetylated by lysine acetyltransferase EP300; which activates transcriptional capacity. Lysine residues that are sumoylated also seem to be target for acetylation. Expressed in heart, spleen, lung, kidney, brain, testis and epididymis but not in salivary glands.

It localises to the nucleus. In terms of biological role, transcription factor whose activation results in up-regulation of target genes, such as IGFII, leading to uncontrolled cell proliferation: when overexpressed in cultured cells, higher proliferation rate and transformation are observed. Other target genes such as CRLF1, CRABP2, CRIP2, PIGF are strongly induced in cells with PLAG1 induction. Proto-oncogene whose ectopic expression can trigger the development of pleomorphic adenomas of the salivary gland and lipoblastomas. Cooperates with CBFB-MYH11. The polypeptide is Zinc finger protein PLAG1 (Plag1) (Rattus norvegicus (Rat)).